The chain runs to 229 residues: Non-structural protein V (229 aa).

2 stretches are compositionally biased toward polar residues: residues 30-46 and 82-112; these read ATSQ…SSRT and GRQN…LPSP. The interval 30 to 112 is disordered; it reads ATSQSSLNKP…MGSDTQLPSP (83 aa). Zn(2+) contacts are provided by His178, Cys197, Cys201, Cys213, Cys215, Cys218, Cys222, and Cys225.

The protein belongs to the paramyxoviruses V protein family.

In terms of biological role, blocks host interferon signaling. This Homo sapiens (Human) protein is Non-structural protein V (P/V).